A 198-amino-acid polypeptide reads, in one-letter code: Putative coiled-coil domain-containing protein 196 (198 aa).

Residues 24-117 (NYLKELNEDL…RKEMEMLWNK (94 aa)) adopt a coiled-coil conformation. 2 stretches are compositionally biased toward basic and acidic residues: residues 135 to 144 (NKTDLQDGKA) and 154 to 167 (TKNELETLCAEKGK). The interval 135–198 (NKTDLQDGKA…VSGTSQHHSE (64 aa)) is disordered. Residues 187 to 198 (GQVSGTSQHHSE) are compositionally biased toward polar residues.

This chain is Putative coiled-coil domain-containing protein 196, found in Bos taurus (Bovine).